Reading from the N-terminus, the 220-residue chain is Ras-related protein Rab-3A (220 aa).

11 residues coordinate GTP: Ser-31, Ser-32, Val-33, Gly-34, Lys-35, Thr-36, Ser-37, Thr-48, Pro-49, Ser-53, and Thr-54. Thr-36 lines the Mg(2+) pocket. A Switch 1 motif is present at residues 49-58; it reads PAFVSTVGID. Residues Thr-54 and Asp-77 each coordinate Mg(2+). Position 80 (Gly-80) interacts with GTP. Residues 80 to 96 carry the Switch 2 motif; it reads GQERYRTITTAYYRGAM. Thr-86 is subject to Phosphothreonine. GTP-binding residues include Asn-135, Lys-136, Asp-138, Ala-166, and Lys-167. A phosphoserine mark is found at Ser-188 and Ser-190. The tract at residues 194–220 is disordered; it reads ADPAVTGAKQGPQLTDQQAPPHQDCAC. 2 S-geranylgeranyl cysteine lipidation sites follow: Cys-218 and Cys-220. At Cys-220 the chain carries Cysteine methyl ester.

This sequence belongs to the small GTPase superfamily. Rab family. As to quaternary structure, interacts with RIMS1 and RIMS2. Interacts with Rabphilin-3A/RPH3A and Rab effector Noc2/RPH3AL. Interacts with SYTL4. Interacts with RAB3IP. Interacts with SGSM1 and SGSM3. Interacts with SYT1. Interacts with MYH9; this interaction is essential for lysosome exocytosis and plasma membrane repair. Interacts with STXBP1; this interaction promotes RAB3A dissociation from the vesicle membrane. Interacts with SNCA. Interacts with GDI1, GDI2, CHM and CHML; phosphorylation at Thr-86 disrupts these interactions. Interacts with MADD (via uDENN domain); the GTP-bound form is preferred for interaction. Requires Mg(2+) as cofactor. Post-translationally, phosphorylation of Thr-86 in the switch II region by LRRK2 prevents the association of RAB regulatory proteins, including CHM, CHML and RAB GDP dissociation inhibitors GDI1 and GDI2.

It is found in the cytoplasm. The protein localises to the cytosol. It localises to the lysosome. The protein resides in the cytoplasmic vesicle. Its subcellular location is the secretory vesicle. It is found in the cell projection. The protein localises to the axon. It localises to the cell membrane. The protein resides in the presynapse. Its subcellular location is the postsynapse. It carries out the reaction GTP + H2O = GDP + phosphate + H(+). Its activity is regulated as follows. Regulated by guanine nucleotide exchange factors (GEFs) including RAB3IL1 and MADD which promote the exchange of bound GDP for free GTP. Regulated by GTPase activating proteins (GAPs) including RAB3GAP1 and TBC1D10B which increase the GTP hydrolysis activity. Inhibited by GDP dissociation inhibitors (GDIs) which prevent Rab-GDP dissociation. Its function is as follows. The small GTPases Rab are key regulators of intracellular membrane trafficking, from the formation of transport vesicles to their fusion with membranes. Rabs cycle between an inactive GDP-bound form and an active GTP-bound form that is able to recruit to membranes different sets of downstream effectors directly responsible for vesicle formation, movement, tethering and fusion. RAB3A plays a central role in regulated exocytosis and secretion. Controls the recruitment, tethering and docking of secretory vesicles to the plasma membrane. Upon stimulation, switches to its active GTP-bound form, cycles to vesicles and recruits effectors such as RIMS1, RIMS2, Rabphilin-3A/RPH3A, RPH3AL or SYTL4 to help the docking of vesicules onto the plasma membrane. Upon GTP hydrolysis by GTPase-activating protein, dissociates from the vesicle membrane allowing the exocytosis to proceed. Stimulates insulin secretion through interaction with RIMS2 or RPH3AL effectors in pancreatic beta cells. Regulates calcium-dependent lysosome exocytosis and plasma membrane repair (PMR) via the interaction with 2 effectors, SYTL4 and myosin-9/MYH9. Acts as a positive regulator of acrosome content secretion in sperm cells by interacting with RIMS1. Also plays a role in the regulation of dopamine release by interacting with synaptotagmin I/SYT. This Sus scrofa (Pig) protein is Ras-related protein Rab-3A (RAB3A).